Consider the following 1076-residue polypeptide: Nickel-cobalt-cadmium resistance protein NccA (1076 aa).

A run of 12 helical transmembrane segments spans residues 14-34 (WLVL…LNLL), 367-387 (VAKN…ALLG), 391-411 (AAVI…IGMN), 419-439 (LMSL…IIVE), 476-496 (TVYG…FQGV), 503-523 (PMVI…LTFV), 562-582 (MPFL…FTFV), 904-924 (LAII…MAIG), 929-949 (TATV…ALVL), 960-980 (VGFI…ISAI), 1004-1024 (PVLM…IATG), and 1036-1056 (VVIG…PAVC).

This sequence belongs to the resistance-nodulation-cell division (RND) (TC 2.A.6) family.

Its subcellular location is the cell membrane. Component of the NCC cation-efflux system that confers resistance to nickel, cobalt and cadmium. May form a membrane tunnel, which allows ion transport across the membrane. The polypeptide is Nickel-cobalt-cadmium resistance protein NccA (nccA) (Alcaligenes xylosoxydans xylosoxydans (Achromobacter xylosoxidans)).